The primary structure comprises 295 residues: CRISPR-associated endonuclease Cas1 2 (295 aa).

Glutamate 155, histidine 215, and glutamate 230 together coordinate Mn(2+).

Belongs to the CRISPR-associated endonuclease Cas1 family. In terms of assembly, homodimer, forms a heterotetramer with a Cas2 homodimer. Requires Mg(2+) as cofactor. Mn(2+) is required as a cofactor.

CRISPR (clustered regularly interspaced short palindromic repeat), is an adaptive immune system that provides protection against mobile genetic elements (viruses, transposable elements and conjugative plasmids). CRISPR clusters contain spacers, sequences complementary to antecedent mobile elements, and target invading nucleic acids. CRISPR clusters are transcribed and processed into CRISPR RNA (crRNA). Acts as a dsDNA endonuclease. Involved in the integration of spacer DNA into the CRISPR cassette. In Pyrobaculum aerophilum (strain ATCC 51768 / DSM 7523 / JCM 9630 / CIP 104966 / NBRC 100827 / IM2), this protein is CRISPR-associated endonuclease Cas1 2.